A 557-amino-acid polypeptide reads, in one-letter code: Dihydroxy-acid dehydratase (557 aa).

D78 is a binding site for Mg(2+). C119 provides a ligand contact to [2Fe-2S] cluster. Mg(2+) contacts are provided by D120 and K121. N6-carboxylysine is present on K121. Residue C192 coordinates [2Fe-2S] cluster. E442 provides a ligand contact to Mg(2+). S468 acts as the Proton acceptor in catalysis.

This sequence belongs to the IlvD/Edd family. In terms of assembly, homodimer. [2Fe-2S] cluster serves as cofactor. Mg(2+) is required as a cofactor.

It catalyses the reaction (2R)-2,3-dihydroxy-3-methylbutanoate = 3-methyl-2-oxobutanoate + H2O. The catalysed reaction is (2R,3R)-2,3-dihydroxy-3-methylpentanoate = (S)-3-methyl-2-oxopentanoate + H2O. It functions in the pathway amino-acid biosynthesis; L-isoleucine biosynthesis; L-isoleucine from 2-oxobutanoate: step 3/4. The protein operates within amino-acid biosynthesis; L-valine biosynthesis; L-valine from pyruvate: step 3/4. Its function is as follows. Functions in the biosynthesis of branched-chain amino acids. Catalyzes the dehydration of (2R,3R)-2,3-dihydroxy-3-methylpentanoate (2,3-dihydroxy-3-methylvalerate) into 2-oxo-3-methylpentanoate (2-oxo-3-methylvalerate) and of (2R)-2,3-dihydroxy-3-methylbutanoate (2,3-dihydroxyisovalerate) into 2-oxo-3-methylbutanoate (2-oxoisovalerate), the penultimate precursor to L-isoleucine and L-valine, respectively. In Bacillus cytotoxicus (strain DSM 22905 / CIP 110041 / 391-98 / NVH 391-98), this protein is Dihydroxy-acid dehydratase.